The sequence spans 342 residues: Probable dual-specificity RNA methyltransferase RlmN (342 aa).

Glutamate 91 acts as the Proton acceptor in catalysis. The region spanning 97-327 is the Radical SAM core domain; that stretch reads YKHGNSICVS…TTIRREMGAD (231 aa). The cysteines at positions 104 and 332 are disulfide-linked. 3 residues coordinate [4Fe-4S] cluster: cysteine 111, cysteine 115, and cysteine 118. S-adenosyl-L-methionine contacts are provided by residues 158–159, serine 190, 213–215, and asparagine 289; these read GE and SLH. Cysteine 332 functions as the S-methylcysteine intermediate in the catalytic mechanism.

Belongs to the radical SAM superfamily. RlmN family. Requires [4Fe-4S] cluster as cofactor.

Its subcellular location is the cytoplasm. It catalyses the reaction adenosine(2503) in 23S rRNA + 2 reduced [2Fe-2S]-[ferredoxin] + 2 S-adenosyl-L-methionine = 2-methyladenosine(2503) in 23S rRNA + 5'-deoxyadenosine + L-methionine + 2 oxidized [2Fe-2S]-[ferredoxin] + S-adenosyl-L-homocysteine. It carries out the reaction adenosine(37) in tRNA + 2 reduced [2Fe-2S]-[ferredoxin] + 2 S-adenosyl-L-methionine = 2-methyladenosine(37) in tRNA + 5'-deoxyadenosine + L-methionine + 2 oxidized [2Fe-2S]-[ferredoxin] + S-adenosyl-L-homocysteine. In terms of biological role, specifically methylates position 2 of adenine 2503 in 23S rRNA and position 2 of adenine 37 in tRNAs. The polypeptide is Probable dual-specificity RNA methyltransferase RlmN (Clostridium botulinum (strain Okra / Type B1)).